The following is a 297-amino-acid chain: Putative 6-phosphogluconate dehydrogenase YqeC (297 aa).

Residues 7 to 12 (GLGKMG) and N94 each bind NAD(+). Residues N94 and 120–122 (SGG) each bind substrate. Residue K170 is the Proton acceptor of the active site. 173 to 174 (HN) is a binding site for substrate. The active-site Proton donor is E177. Residues Y178 and R268 each contribute to the substrate site.

It belongs to the 6-phosphogluconate dehydrogenase family.

May act as NAD-dependent 6-P-gluconate dehydrogenase. This is Putative 6-phosphogluconate dehydrogenase YqeC (yqeC) from Bacillus subtilis (strain 168).